The following is a 380-amino-acid chain: Transporter PPE51 (380 aa).

Residue Met-1 is modified to N-acetylmethionine.

It belongs to the mycobacterial PPE family. As to quaternary structure, interacts with PE19 and PE25.

Its subcellular location is the cell outer membrane. Its function is as follows. Small molecule-selective channel required for the uptake of nutrients across the outer mycomembrane. Transports glycerol and glucose. Involved in sensitivity to M.tuberculosis growth inhibitory agrichemical 3,3-bis-di(methylsulfonyl)propionamide (3bMP1). Transports maltose and lactose disaccharides. Involved in sensitivity to bactericidal thio-disaccharide T-6 compound (1,6-anhydro-3-deoxy-4-S-(2,3,4,6-tetra-O-acetyl-beta-D-glucopyranosyl)-D-glycero-hexopyranos-2-ulose). Transports extracellular trehalose, a component of the cell envelope, and trehalose analog, 6-azido trehalose (6-TreAz), which has antimycobacterial activity. Functionally, plays a role in response to starvation and stress, likely environment within the host. Inhibits canonical autophagy in infected mouse RAW264.7 macrophages. Inhibits autophagy and enhances intracellular bacterial survival when expressed in human macrophage-like THP-1 cells. Inhibits Toll-like receptor 2 (TLR2)-dependent signaling leading to autophagy inhibition, increased intracellular bacterial survival, reduced phagocytosis and reduced secretion of interleukin 6 (IL-6) and IL-1 in infected mouse primary bone marrow-derived macrophage (BMDM) cells. Required for virulence and persistence in the lungs and spleens of intranasally infected C57BL/6J mice. Blocks the antibacterial effects of TLR2 activation, suppresses MHC class II-dependent antigen presentation, and reduces IFN-gamma and TNF-alpha-producing CD4(+) T cells during infection in C57BL/6J mice. This Mycobacterium tuberculosis (strain CDC 1551 / Oshkosh) protein is Transporter PPE51 (PPE51).